A 192-amino-acid polypeptide reads, in one-letter code: HTH-type transcriptional repressor SCO4008 (192 aa).

The HTH tetR-type domain maps to glutamate 7–leucine 67. A DNA-binding region (H-T-H motif) is located at residues arginine 30–tyrosine 49.

As to quaternary structure, homodimer. Four dimers bind to the two operator sites.

Its activity is regulated as follows. Binding of a wide range of cationic hydrophobic compounds to SCO4008 causes a decrease in DNA-binding, probably via allosteric conformational change of SCO4008. In terms of biological role, probably regulates the expression of its own gene and the adjacent SCO4007 gene by binding to two operator sites in the SCO4007-SCO4008 intergenic region. This Streptomyces coelicolor (strain ATCC BAA-471 / A3(2) / M145) protein is HTH-type transcriptional repressor SCO4008.